The following is a 315-amino-acid chain: 4-hydroxy-3-methylbut-2-enyl diphosphate reductase (315 aa).

[4Fe-4S] cluster is bound at residue Cys-12. Residues His-41 and His-74 each contribute to the (2E)-4-hydroxy-3-methylbut-2-enyl diphosphate site. Dimethylallyl diphosphate is bound by residues His-41 and His-74. Positions 41 and 74 each coordinate isopentenyl diphosphate. [4Fe-4S] cluster is bound at residue Cys-96. His-124 is a binding site for (2E)-4-hydroxy-3-methylbut-2-enyl diphosphate. Residue His-124 participates in dimethylallyl diphosphate binding. His-124 is an isopentenyl diphosphate binding site. Residue Glu-126 is the Proton donor of the active site. Thr-168 is a (2E)-4-hydroxy-3-methylbut-2-enyl diphosphate binding site. Cys-198 lines the [4Fe-4S] cluster pocket. (2E)-4-hydroxy-3-methylbut-2-enyl diphosphate is bound by residues Ser-226, Ser-227, Asn-228, and Ser-270. Dimethylallyl diphosphate-binding residues include Ser-226, Ser-227, Asn-228, and Ser-270. 4 residues coordinate isopentenyl diphosphate: Ser-226, Ser-227, Asn-228, and Ser-270.

This sequence belongs to the IspH family. Requires [4Fe-4S] cluster as cofactor.

The catalysed reaction is isopentenyl diphosphate + 2 oxidized [2Fe-2S]-[ferredoxin] + H2O = (2E)-4-hydroxy-3-methylbut-2-enyl diphosphate + 2 reduced [2Fe-2S]-[ferredoxin] + 2 H(+). The enzyme catalyses dimethylallyl diphosphate + 2 oxidized [2Fe-2S]-[ferredoxin] + H2O = (2E)-4-hydroxy-3-methylbut-2-enyl diphosphate + 2 reduced [2Fe-2S]-[ferredoxin] + 2 H(+). It functions in the pathway isoprenoid biosynthesis; dimethylallyl diphosphate biosynthesis; dimethylallyl diphosphate from (2E)-4-hydroxy-3-methylbutenyl diphosphate: step 1/1. It participates in isoprenoid biosynthesis; isopentenyl diphosphate biosynthesis via DXP pathway; isopentenyl diphosphate from 1-deoxy-D-xylulose 5-phosphate: step 6/6. Functionally, catalyzes the conversion of 1-hydroxy-2-methyl-2-(E)-butenyl 4-diphosphate (HMBPP) into a mixture of isopentenyl diphosphate (IPP) and dimethylallyl diphosphate (DMAPP). Acts in the terminal step of the DOXP/MEP pathway for isoprenoid precursor biosynthesis. The sequence is that of 4-hydroxy-3-methylbut-2-enyl diphosphate reductase from Pseudomonas syringae pv. tomato (strain ATCC BAA-871 / DC3000).